Here is a 360-residue protein sequence, read N- to C-terminus: Vignain (360 aa).

The signal sequence occupies residues 1 to 20; the sequence is MQKFILLALSLALVLAITES. A propeptide spans 21-124 (activation peptide); sequence FDFHEKELES…NGTFMYEKVD (104 aa). Asn-115 carries N-linked (GlcNAc...) asparagine glycosylation. 3 disulfides stabilise this stretch: Cys-147/Cys-189, Cys-181/Cys-222, and Cys-280/Cys-332. The active site involves Cys-150. Catalysis depends on residues His-286 and Asn-307. A disordered region spans residues 341-360; it reads PIKKSSNNPSGIKSSPKDEL. Residues 344–353 show a composition bias toward polar residues; sequence KSSNNPSGIK. Residues 354 to 360 constitute a propeptide, removed in mature form; it reads SSPKDEL. The segment at 357–360 is prevents secretion from ER; that stretch reads KDEL.

The protein belongs to the peptidase C1 family. Post-translationally, the potential N-glycosylation site at Asn-115 is not glycosylated.

The protein localises to the cytoplasmic vesicle. With respect to regulation, low pH triggers activation of the protease and removal of the propeptide and the KDEL motif. Involved in programmed cell death. Shows a pronounced preference for hydrophobic residues in the P2 position and no obvious preference in the P1 position of the cleavage site. Accepts proline at the P1 and P1' positions. In Ricinus communis (Castor bean), this protein is Vignain (CYSEP).